We begin with the raw amino-acid sequence, 413 residues long: Serine hydroxymethyltransferase (413 aa).

Residues L119 and 123 to 125 (GHL) each bind (6S)-5,6,7,8-tetrahydrofolate. K228 bears the N6-(pyridoxal phosphate)lysine mark. Residue 351 to 353 (SPF) participates in (6S)-5,6,7,8-tetrahydrofolate binding.

This sequence belongs to the SHMT family. In terms of assembly, homodimer. Requires pyridoxal 5'-phosphate as cofactor.

The protein localises to the cytoplasm. It carries out the reaction (6R)-5,10-methylene-5,6,7,8-tetrahydrofolate + glycine + H2O = (6S)-5,6,7,8-tetrahydrofolate + L-serine. Its pathway is one-carbon metabolism; tetrahydrofolate interconversion. It functions in the pathway amino-acid biosynthesis; glycine biosynthesis; glycine from L-serine: step 1/1. In terms of biological role, catalyzes the reversible interconversion of serine and glycine with tetrahydrofolate (THF) serving as the one-carbon carrier. This reaction serves as the major source of one-carbon groups required for the biosynthesis of purines, thymidylate, methionine, and other important biomolecules. Also exhibits THF-independent aldolase activity toward beta-hydroxyamino acids, producing glycine and aldehydes, via a retro-aldol mechanism. The polypeptide is Serine hydroxymethyltransferase (Clostridium botulinum (strain 657 / Type Ba4)).